The primary structure comprises 629 residues: tRNA uridine 5-carboxymethylaminomethyl modification enzyme MnmG (629 aa).

13–18 (GGGHAG) lines the FAD pocket. 273-287 (GPRYCPSIEDKIHRF) contributes to the NAD(+) binding site.

It belongs to the MnmG family. Homodimer. Heterotetramer of two MnmE and two MnmG subunits. FAD is required as a cofactor.

The protein localises to the cytoplasm. Its function is as follows. NAD-binding protein involved in the addition of a carboxymethylaminomethyl (cmnm) group at the wobble position (U34) of certain tRNAs, forming tRNA-cmnm(5)s(2)U34. This Shewanella baltica (strain OS195) protein is tRNA uridine 5-carboxymethylaminomethyl modification enzyme MnmG.